The following is a 597-amino-acid chain: Apurinic-apyrimidinic endonuclease 1 (597 aa).

The span at 232-246 (YNNDTKYLSNPKGVT) shows a compositional bias: polar residues. Residues 232-296 (YNNDTKYLSN…IPPIPKNTED (65 aa)) form a disordered region. Residues 265-274 (NNNNNNNNNK) show a composition bias toward low complexity. Positions 380, 420, 456, 490, 493, 527, 540, 542, and 572 each coordinate Zn(2+). Residue H493 coordinates Mn(2+). Mn(2+) contacts are provided by D540 and H542.

The protein belongs to the AP endonuclease 2 family. Zn(2+) serves as cofactor. Requires Mn(2+) as cofactor. In terms of processing, may be proteolytically cleaved into a 59 kDa form.

It localises to the mitochondrion. With respect to regulation, apurinic/apyrimidinic (AP) endonuclease activity is enhanced with increasing concentrations of Mn(2+), while Zn(2+) initially enhances activity but subsequently inhibits activity in a concentration-dependent manner. Co(2+) inhibits apurinic/apyrimidinic (AP) endonuclease activity at concentrations greater than 2.5 mM. Plays a role in mitochondrial DNA base excision repair (BER) pathway induced by oxidative stress. Has apurinic/apyrimidinic (AP) endonuclease activity towards double-stranded DNA (dsDNA) with a preference for C as opposite base. Has 3'-phosphatase activity; removes 3'-phosphate from blunt-end, recessed, and gapped DNA templates and thus, removes 3'-blocks for DNA polymerase activity during BER. Lacks 3'-5' exonuclease activity and does not cleave damaged bases by nucleotide incision repair (NIR). This is Apurinic-apyrimidinic endonuclease 1 from Plasmodium falciparum (isolate 3D7).